A 148-amino-acid chain; its full sequence is Macrodomain Ter protein (148 aa).

The protein belongs to the MatP family. As to quaternary structure, homodimer.

Its subcellular location is the cytoplasm. Functionally, required for spatial organization of the terminus region of the chromosome (Ter macrodomain) during the cell cycle. Prevents early segregation of duplicated Ter macrodomains during cell division. Binds specifically to matS, which is a 13 bp signature motif repeated within the Ter macrodomain. The protein is Macrodomain Ter protein of Haemophilus influenzae (strain ATCC 51907 / DSM 11121 / KW20 / Rd).